The primary structure comprises 165 residues: Glucosamine 6-phosphate N-acetyltransferase (165 aa).

The N-acetyltransferase domain maps to 22-165; the sequence is FKVRPLAKDD…DDCNFMTQRF (144 aa). Residues Thr-44, 92-95, and 104-106 each bind substrate; these read KFIH and EDV. Residue 114 to 119 coordinates acetyl-CoA; it reads RQKLGA. Residues 135-136 and Arg-164 each bind substrate; that span reads YK.

Belongs to the acetyltransferase family. GNA1 subfamily.

It carries out the reaction D-glucosamine 6-phosphate + acetyl-CoA = N-acetyl-D-glucosamine 6-phosphate + CoA + H(+). Its pathway is nucleotide-sugar biosynthesis; UDP-N-acetyl-alpha-D-glucosamine biosynthesis; N-acetyl-alpha-D-glucosamine 1-phosphate from alpha-D-glucosamine 6-phosphate (route I): step 1/2. This is Glucosamine 6-phosphate N-acetyltransferase (gna-1) from Caenorhabditis elegans.